The sequence spans 303 residues: Lipase chaperone (303 aa).

The chain crosses the membrane as a helical span at residues 7 to 23 (TLAAACAAWLAWWAWPD).

Belongs to the lipase chaperone family.

The protein localises to the cell inner membrane. May be involved in the folding of the extracellular lipase during its passage through the periplasm. In Chromobacterium violaceum (strain ATCC 12472 / DSM 30191 / JCM 1249 / CCUG 213 / NBRC 12614 / NCIMB 9131 / NCTC 9757 / MK), this protein is Lipase chaperone (lifO).